Here is a 1051-residue protein sequence, read N- to C-terminus: Carbamoyl phosphate synthase large chain (1051 aa).

Residues 1-399 (MKETPKKVLV…SLQKAVRMLD (399 aa)) form a carboxyphosphate synthetic domain region. Residues arginine 127, arginine 167, glycine 173, glycine 174, lysine 206, leucine 208, glutamate 213, glycine 239, valine 240, histidine 241, glutamine 282, and glutamate 296 each coordinate ATP. Residues 131 to 325 (RETMIENNLP…LAYVSAKLAL (195 aa)) form the ATP-grasp 1 domain. The Mg(2+) site is built by glutamine 282, glutamate 296, and asparagine 298. Positions 282, 296, and 298 each coordinate Mn(2+). The tract at residues 400-548 (IGEPGVVGGK…LTYNGTEDDL (149 aa)) is oligomerization domain. Residues 549–930 (EFSQGNKLLI…LKSWLSSIPN (382 aa)) are carbamoyl phosphate synthetic domain. The ATP-grasp 2 domain occupies 673–863 (SKLLDKLGIS…LINEAMKAIF (191 aa)). Residues arginine 709, lysine 748, isoleucine 750, glutamate 755, glycine 779, valine 780, histidine 781, serine 782, glutamine 822, and glutamate 834 each contribute to the ATP site. Residues glutamine 822, glutamate 834, and asparagine 836 each contribute to the Mg(2+) site. The Mn(2+) site is built by glutamine 822, glutamate 834, and asparagine 836. The MGS-like domain maps to 930–1051 (NRIPNKNGIA…FEISEYGGGI (122 aa)). Positions 931-1051 (RIPNKNGIAL…FEISEYGGGI (121 aa)) are allosteric domain.

This sequence belongs to the CarB family. In terms of assembly, composed of two chains; the small (or glutamine) chain promotes the hydrolysis of glutamine to ammonia, which is used by the large (or ammonia) chain to synthesize carbamoyl phosphate. Tetramer of heterodimers (alpha,beta)4. Requires Mg(2+) as cofactor. It depends on Mn(2+) as a cofactor.

The catalysed reaction is hydrogencarbonate + L-glutamine + 2 ATP + H2O = carbamoyl phosphate + L-glutamate + 2 ADP + phosphate + 2 H(+). It carries out the reaction hydrogencarbonate + NH4(+) + 2 ATP = carbamoyl phosphate + 2 ADP + phosphate + 2 H(+). Its pathway is amino-acid biosynthesis; L-arginine biosynthesis; carbamoyl phosphate from bicarbonate: step 1/1. It functions in the pathway pyrimidine metabolism; UMP biosynthesis via de novo pathway; (S)-dihydroorotate from bicarbonate: step 1/3. In terms of biological role, large subunit of the glutamine-dependent carbamoyl phosphate synthetase (CPSase). CPSase catalyzes the formation of carbamoyl phosphate from the ammonia moiety of glutamine, carbonate, and phosphate donated by ATP, constituting the first step of 2 biosynthetic pathways, one leading to arginine and/or urea and the other to pyrimidine nucleotides. The large subunit (synthetase) binds the substrates ammonia (free or transferred from glutamine from the small subunit), hydrogencarbonate and ATP and carries out an ATP-coupled ligase reaction, activating hydrogencarbonate by forming carboxy phosphate which reacts with ammonia to form carbamoyl phosphate. In Saccharolobus islandicus (strain L.S.2.15 / Lassen #1) (Sulfolobus islandicus), this protein is Carbamoyl phosphate synthase large chain.